We begin with the raw amino-acid sequence, 202 residues long: uncharacterized protein (202 aa).

This is an uncharacterized protein from Homo sapiens (Human).